Here is a 925-residue protein sequence, read N- to C-terminus: Aspulvinone E synthetase melA (925 aa).

Residues 11–434 (ETAAARNGDG…GGRAKETIII (424 aa)) are adenylation (A) domain. The 81-residue stretch at 564–644 (SPKNDFEKGL…ELAAALDNLY (81 aa)) folds into the Carrier domain. Ser601 is subject to O-(pantetheine 4'-phosphoryl)serine. The segment at 663–923 (PLWLVHPGAG…KILRSALAER (261 aa)) is thioesterase (TE) domain.

It belongs to the NRP synthetase family.

It localises to the cytoplasm. The enzyme catalyses 2 3-(4-hydroxyphenyl)pyruvate + AH2 + 2 ATP + O2 = aspulvinone E + A + 2 AMP + CO2 + 2 diphosphate + H2O + H(+). Functionally, nonribosomal peptide synthase; part of the gene cluster that mediates the biosynthesis of Asp-melanin, a pigment that confers resistance against UV light and hampers phagocytosis by soil amoeba. The nonribosomal peptide synthase melA converts 4-hydroxyphenylpyruvate (4-HPPA) to aspulvinone E. The tyrosinase tyrP then performs hydroxylations of both aromatic moieties of aspulvinone E. The product of tyrP is highly unstable, and, due to the high reactivity of methides and ortho-diquinones, the polymeric Asp-melanin forms spontaneously. This is Aspulvinone E synthetase melA from Aspergillus terreus (strain NIH 2624 / FGSC A1156).